We begin with the raw amino-acid sequence, 297 residues long: ClpXP adapter protein SpxH (297 aa).

Belongs to the SpxH family. In terms of assembly, interacts with Spx.

The protein resides in the cytoplasm. In terms of biological role, adapter protein required for efficient degradation of Spx by ClpXP under non-stress conditions. Interaction with Spx stabilizes Spx and exposes the C-terminus of Spx for recognition and proteolysis by ClpXP. The protein is ClpXP adapter protein SpxH of Bacillus cereus (strain ATCC 14579 / DSM 31 / CCUG 7414 / JCM 2152 / NBRC 15305 / NCIMB 9373 / NCTC 2599 / NRRL B-3711).